We begin with the raw amino-acid sequence, 188 residues long: Peptidyl-tRNA hydrolase (188 aa).

A tRNA-binding site is contributed by tyrosine 16. Histidine 21 functions as the Proton acceptor in the catalytic mechanism. The tRNA site is built by phenylalanine 66, asparagine 68, and asparagine 114.

The protein belongs to the PTH family. Monomer.

It localises to the cytoplasm. The enzyme catalyses an N-acyl-L-alpha-aminoacyl-tRNA + H2O = an N-acyl-L-amino acid + a tRNA + H(+). Functionally, hydrolyzes ribosome-free peptidyl-tRNAs (with 1 or more amino acids incorporated), which drop off the ribosome during protein synthesis, or as a result of ribosome stalling. In terms of biological role, catalyzes the release of premature peptidyl moieties from peptidyl-tRNA molecules trapped in stalled 50S ribosomal subunits, and thus maintains levels of free tRNAs and 50S ribosomes. This is Peptidyl-tRNA hydrolase from Geobacter sp. (strain M21).